A 444-amino-acid polypeptide reads, in one-letter code: Phosphoglucosamine mutase (444 aa).

The Phosphoserine intermediate role is filled by S102. Positions 102, 239, 241, and 243 each coordinate Mg(2+). S102 is modified (phosphoserine).

Belongs to the phosphohexose mutase family. The cofactor is Mg(2+). Activated by phosphorylation.

It catalyses the reaction alpha-D-glucosamine 1-phosphate = D-glucosamine 6-phosphate. Its function is as follows. Catalyzes the conversion of glucosamine-6-phosphate to glucosamine-1-phosphate. In Saccharopolyspora erythraea (strain ATCC 11635 / DSM 40517 / JCM 4748 / NBRC 13426 / NCIMB 8594 / NRRL 2338), this protein is Phosphoglucosamine mutase.